The chain runs to 245 residues: tRNA pseudouridine synthase A (245 aa).

The active-site Nucleophile is the Asp52. Residue Tyr111 participates in substrate binding.

The protein belongs to the tRNA pseudouridine synthase TruA family. As to quaternary structure, homodimer.

It catalyses the reaction uridine(38/39/40) in tRNA = pseudouridine(38/39/40) in tRNA. Formation of pseudouridine at positions 38, 39 and 40 in the anticodon stem and loop of transfer RNAs. The polypeptide is tRNA pseudouridine synthase A (Rickettsia akari (strain Hartford)).